Here is a 423-residue protein sequence, read N- to C-terminus: Histidine--tRNA ligase (423 aa).

Belongs to the class-II aminoacyl-tRNA synthetase family. Homodimer.

Its subcellular location is the cytoplasm. It catalyses the reaction tRNA(His) + L-histidine + ATP = L-histidyl-tRNA(His) + AMP + diphosphate + H(+). This chain is Histidine--tRNA ligase, found in Halorhodospira halophila (strain DSM 244 / SL1) (Ectothiorhodospira halophila (strain DSM 244 / SL1)).